The following is a 185-amino-acid chain: MVSSWRVQQAAREIRAGAVIAYPTEAVWGLGCDPWNEDAVYRLLALKSRPVDKGLILVADNIRQFDFLFEDFPEDWIDRMGSTWPGPNTWLVPHQDLLPEWVTGQHDTVALRVSDHPQVRELCALVGPLISTSCNPGGRPAAKSRLRVEQYFHGDLDMVLGGALGGRKNPSVIRNLATGEIVRPG.

A YrdC-like domain is found at 4 to 185 (SWRVQQAARE…LATGEIVRPG (182 aa)).

The protein belongs to the SUA5 family. TsaC subfamily.

The protein localises to the cytoplasm. The catalysed reaction is L-threonine + hydrogencarbonate + ATP = L-threonylcarbamoyladenylate + diphosphate + H2O. Its function is as follows. Required for the formation of a threonylcarbamoyl group on adenosine at position 37 (t(6)A37) in tRNAs that read codons beginning with adenine. Catalyzes the conversion of L-threonine, HCO(3)(-)/CO(2) and ATP to give threonylcarbamoyl-AMP (TC-AMP) as the acyladenylate intermediate, with the release of diphosphate. The protein is Threonylcarbamoyl-AMP synthase of Pseudomonas putida (strain W619).